The following is a 301-amino-acid chain: Probable alpha-L-glutamate ligase (301 aa).

The region spanning Leu104 to Glu287 is the ATP-grasp domain. Residues Lys141, Glu178 to Tyr179, Asp187, and Arg211 to Asn213 contribute to the ATP site. Positions 248, 260, and 262 each coordinate Mg(2+). Mn(2+) contacts are provided by Asp248, Glu260, and Asn262.

The protein belongs to the RimK family. Mg(2+) is required as a cofactor. Requires Mn(2+) as cofactor.

This is Probable alpha-L-glutamate ligase from Ectopseudomonas mendocina (strain ymp) (Pseudomonas mendocina).